Consider the following 210-residue polypeptide: MADS-box protein AeAP3-2 (210 aa).

Residues 1–36 enclose the MADS-box domain; it reads GGLLKKARELAILCDAQLGVIIFSSSGKMFEFSSPP. Residues 59-149 form the K-box domain; that stretch reads NQQVYCEITR…YRVIQDHHAA (91 aa).

As to expression, expressed exclusively in the carpel.

The protein localises to the nucleus. Functionally, probable transcription factor. The protein is MADS-box protein AeAP3-2 (AP3-2) of Asarum europaeum (Asarabacca).